Reading from the N-terminus, the 106-residue chain is uncharacterized protein (106 aa).

This is an uncharacterized protein from Rhodococcus erythropolis (Arthrobacter picolinophilus).